The primary structure comprises 445 residues: Phosphoglucosamine mutase (445 aa).

S102 serves as the catalytic Phosphoserine intermediate. Mg(2+) contacts are provided by S102, D241, D243, and D245. Residue S102 is modified to Phosphoserine.

It belongs to the phosphohexose mutase family. The cofactor is Mg(2+). Activated by phosphorylation.

It catalyses the reaction alpha-D-glucosamine 1-phosphate = D-glucosamine 6-phosphate. In terms of biological role, catalyzes the conversion of glucosamine-6-phosphate to glucosamine-1-phosphate. The polypeptide is Phosphoglucosamine mutase (Edwardsiella ictaluri (strain 93-146)).